Reading from the N-terminus, the 454-residue chain is Allantoinase (454 aa).

His-60, His-62, Lys-147, His-183, His-239, and Asp-312 together coordinate Zn(2+). The residue at position 147 (Lys-147) is an N6-carboxylysine.

It belongs to the metallo-dependent hydrolases superfamily. Allantoinase family. Homotetramer. The cofactor is Zn(2+). In terms of processing, carboxylation allows a single lysine to coordinate two zinc ions.

The enzyme catalyses (S)-allantoin + H2O = allantoate + H(+). The protein operates within nitrogen metabolism; (S)-allantoin degradation; allantoate from (S)-allantoin: step 1/1. Its function is as follows. Catalyzes the conversion of allantoin (5-ureidohydantoin) to allantoic acid by hydrolytic cleavage of the five-member hydantoin ring. This chain is Allantoinase, found in Bacillus velezensis (strain DSM 23117 / BGSC 10A6 / LMG 26770 / FZB42) (Bacillus amyloliquefaciens subsp. plantarum).